We begin with the raw amino-acid sequence, 626 residues long: Lipoprotein LpqB (626 aa).

The N-terminal stretch at 1 to 23 (MIGQANRIAAAVSTACLAVLLAG) is a signal peptide. Residue Cys24 is the site of N-palmitoyl cysteine attachment. Residue Cys24 is the site of S-diacylglycerol cysteine attachment. The disordered stretch occupies residues 428–457 (EAEREEDLADDTEPGDTAVGSTERRETDRG). The span at 430–441 (EREEDLADDTEP) shows a compositional bias: acidic residues.

The protein belongs to the LpqB lipoprotein family.

It is found in the cell membrane. The polypeptide is Lipoprotein LpqB (Thermobifida fusca (strain YX)).